Consider the following 307-residue polypeptide: Olfactory receptor 12D2 (307 aa).

Over 1–23 (MLNTTSVTEFLLLGVTDIQELQP) the chain is Extracellular. The N-linked (GlcNAc...) asparagine glycan is linked to asparagine 3. The chain crosses the membrane as a helical span at residues 24 to 44 (FLFVVFLTIYFISVTGNGAVL). Residues 45–52 (MIVISDPR) are Cytoplasmic-facing. Residues 53 to 73 (LHSLMYFFLGNLSYLDICYST) form a helical membrane-spanning segment. Residues 74-97 (VTLPKMLQNFLSTHKAISFLGCIS) lie on the Extracellular side of the membrane. Cysteines 95 and 187 form a disulfide. A helical transmembrane segment spans residues 98–118 (QLHFFHSLGSTESMLFAVMAF). Topologically, residues 119 to 137 (DLSVAICKPLRYTVIMNPQ) are cytoplasmic. Residues 138–158 (LCTQMAITIWVIGFFHALLHS) form a helical membrane-spanning segment. Residues 159 to 195 (VMTSRLNFCGSNRIHHFLCDIKPLLKLACGNTELNQW) are Extracellular-facing. Residues 196–215 (LLSTVTGTIAMGPFFLTLLS) traverse the membrane as a helical segment. The Cytoplasmic segment spans residues 216-236 (YFYIITYLFFKTRSCSMLCKA). A helical transmembrane segment spans residues 237–257 (LSTCASHFMVVILFYAPVLFT). The Extracellular portion of the chain corresponds to 258–270 (YIHPALESFMDQD). The helical transmembrane segment at 271–291 (RIVAIMYTVVTPVLNPLIYTL) threads the bilayer. Residues 292–307 (RNKEVKGALGRVIRRL) are Cytoplasmic-facing.

This sequence belongs to the G-protein coupled receptor 1 family.

Its subcellular location is the cell membrane. Its function is as follows. Odorant receptor. The protein is Olfactory receptor 12D2 (OR12D2) of Homo sapiens (Human).